Reading from the N-terminus, the 144-residue chain is Large ribosomal subunit protein uL15 (144 aa).

The interval 1–54 is disordered; the sequence is MHLNTLKPAEGAKKLAKRKGRGQGSGNGKMAGRGHKGQKSRSGGMPKIGFEGGQ. Positions 22 to 31 are enriched in gly residues; it reads GQGSGNGKMA.

This sequence belongs to the universal ribosomal protein uL15 family. As to quaternary structure, part of the 50S ribosomal subunit.

Binds to the 23S rRNA. The protein is Large ribosomal subunit protein uL15 of Hydrogenovibrio crunogenus (strain DSM 25203 / XCL-2) (Thiomicrospira crunogena).